Here is a 395-residue protein sequence, read N- to C-terminus: MTLRRLRKLQQKEEAAATPDPAARTPDSEVAPAAPVPTPGPPAAAATPGPPADELYAALEDYHPAELYRALAVSGGTLPRRKGSGFRWKNLSQSPEQQRKVLTLEKEDNQTFGFEIQTYGLHHREEQRVEMVTFVCRVHESSPAQLAGLTPGDTIASVNGLNVEGIRHREIVDIIKASGNVLRLETLYGTSIRKAELEARLQYLKQTLYEKWGEYRSLMVQEQRLVHGLVVKDPSIYDTLESVRSCLYGAGLLPGSLPFGPLLAVPGRPRGGARRARGDADDAVYHTCFFGDSEPPALPPPPPPARAFGPGPAETPAVGPGPGPRAALSRSASVRCAGPGGGGGGGAPGALWTEAREQALCGPGLRKTKYRSFRRRLLKFIPGLNRSLEEEESQL.

Residues 1–52 are disordered; it reads MTLRRLRKLQQKEEAAATPDPAARTPDSEVAPAAPVPTPGPPAAAATPGPPA. The segment covering 16–33 has biased composition (low complexity); sequence AATPDPAARTPDSEVAPA. Thr-77 carries the post-translational modification Phosphothreonine. Ser-94 is modified (phosphoserine). In terms of domain architecture, PDZ spans 101 to 190; it reads VLTLEKEDNQ…VLRLETLYGT (90 aa). An interaction with PSCD3 region spans residues 181-258; that stretch reads VLRLETLYGT…GAGLLPGSLP (78 aa). Residue Tyr-237 is modified to Phosphotyrosine. Arg-270 carries the omega-N-methylarginine modification. A disordered region spans residues 293 to 349; it reads SEPPALPPPPPPARAFGPGPAETPAVGPGPGPRAALSRSASVRCAGPGGGGGGGAPG. The span at 296–305 shows a compositional bias: pro residues; it reads PALPPPPPPA. Residues 338 to 348 show a composition bias toward gly residues; it reads GPGGGGGGGAP. A Phosphoserine modification is found at Ser-387.

In terms of assembly, heteromer. Composed of TAMALIN, CYTH2 and at least one GRM1. Also interacts with CYTH3, GRM2, GRM3 and GRM5.

It is found in the cytoplasm. Its subcellular location is the perinuclear region. It localises to the cell membrane. The protein resides in the postsynaptic cell membrane. Its function is as follows. Plays a role in intracellular trafficking and contributes to the macromolecular organization of group 1 metabotropic glutamate receptors (mGluRs) at synapses. The sequence is that of Protein TAMALIN from Homo sapiens (Human).